Consider the following 99-residue polypeptide: (4S)-4-hydroxy-5-phosphonooxypentane-2,3-dione isomerase (99 aa).

Residues 2-91 (HVTLVEINVK…ISEPRKKRSF (90 aa)) form the ABM domain.

The protein belongs to the LsrG family. As to quaternary structure, homodimer.

The protein localises to the cytoplasm. It catalyses the reaction (2S)-2-hydroxy-3,4-dioxopentyl phosphate = 3-hydroxy-2,4-dioxopentyl phosphate. Functionally, involved in the degradation of phospho-AI-2, thereby terminating induction of the lsr operon and closing the AI-2 signaling cycle. Catalyzes the conversion of (4S)-4-hydroxy-5-phosphonooxypentane-2,3-dione (P-DPD) to 3-hydroxy-5-phosphonooxypentane-2,4-dione (P-HPD). This Photorhabdus laumondii subsp. laumondii (strain DSM 15139 / CIP 105565 / TT01) (Photorhabdus luminescens subsp. laumondii) protein is (4S)-4-hydroxy-5-phosphonooxypentane-2,3-dione isomerase.